The chain runs to 320 residues: Cytochrome f (320 aa).

Positions 1-35 (MQNRNTFSWVKEEMTRFISVSIMIYVITRTSISNA) are cleaved as a signal peptide. Heme-binding residues include Tyr-36, Cys-56, Cys-59, and His-60. Residues 286–306 (VQGLLFFLASVILAQIFLVLK) form a helical membrane-spanning segment.

Belongs to the cytochrome f family. In terms of assembly, the 4 large subunits of the cytochrome b6-f complex are cytochrome b6, subunit IV (17 kDa polypeptide, petD), cytochrome f and the Rieske protein, while the 4 small subunits are PetG, PetL, PetM and PetN. The complex functions as a dimer. It depends on heme as a cofactor.

Its subcellular location is the plastid. It localises to the chloroplast thylakoid membrane. Component of the cytochrome b6-f complex, which mediates electron transfer between photosystem II (PSII) and photosystem I (PSI), cyclic electron flow around PSI, and state transitions. The protein is Cytochrome f of Calycanthus floridus var. glaucus (Eastern sweetshrub).